Here is a 239-residue protein sequence, read N- to C-terminus: UDP-2,3-diacylglucosamine hydrolase (239 aa).

Mn(2+) contacts are provided by D9, H11, D42, N80, and H115. 80-81 (NR) contacts substrate. Residues D123, S161, K165, K168, and H196 each coordinate substrate. Positions 196 and 198 each coordinate Mn(2+).

This sequence belongs to the LpxH family. Requires Mn(2+) as cofactor.

It localises to the cell inner membrane. The enzyme catalyses UDP-2-N,3-O-bis[(3R)-3-hydroxytetradecanoyl]-alpha-D-glucosamine + H2O = 2-N,3-O-bis[(3R)-3-hydroxytetradecanoyl]-alpha-D-glucosaminyl 1-phosphate + UMP + 2 H(+). It participates in glycolipid biosynthesis; lipid IV(A) biosynthesis; lipid IV(A) from (3R)-3-hydroxytetradecanoyl-[acyl-carrier-protein] and UDP-N-acetyl-alpha-D-glucosamine: step 4/6. Its function is as follows. Hydrolyzes the pyrophosphate bond of UDP-2,3-diacylglucosamine to yield 2,3-diacylglucosamine 1-phosphate (lipid X) and UMP by catalyzing the attack of water at the alpha-P atom. Involved in the biosynthesis of lipid A, a phosphorylated glycolipid that anchors the lipopolysaccharide to the outer membrane of the cell. The sequence is that of UDP-2,3-diacylglucosamine hydrolase from Pasteurella multocida (strain Pm70).